The following is a 156-amino-acid chain: Small ribosomal subunit protein uS7 (156 aa).

The protein belongs to the universal ribosomal protein uS7 family. In terms of assembly, part of the 30S ribosomal subunit. Contacts proteins S9 and S11.

In terms of biological role, one of the primary rRNA binding proteins, it binds directly to 16S rRNA where it nucleates assembly of the head domain of the 30S subunit. Is located at the subunit interface close to the decoding center, probably blocks exit of the E-site tRNA. The polypeptide is Small ribosomal subunit protein uS7 (Desulforamulus reducens (strain ATCC BAA-1160 / DSM 100696 / MI-1) (Desulfotomaculum reducens)).